The primary structure comprises 319 residues: Cobalamin biosynthesis protein CbiB (319 aa).

5 helical membrane passes run 56–76 (VMWV…LALA), 82–102 (WFGW…RSLA), 153–173 (VDGI…LAMA), 204–224 (VANY…AGLC), and 296–316 (LMWV…CGLS).

It belongs to the CobD/CbiB family.

The protein localises to the cell membrane. It functions in the pathway cofactor biosynthesis; adenosylcobalamin biosynthesis. Its function is as follows. Converts cobyric acid to cobinamide by the addition of aminopropanol on the F carboxylic group. However, the true cosubstrate could be (R)-1-amino-2-propanol O-2-phosphate, leading to cobinamide phosphate. This chain is Cobalamin biosynthesis protein CbiB, found in Salmonella paratyphi B (strain ATCC BAA-1250 / SPB7).